The sequence spans 114 residues: Pro-FMRFamide-related neuropeptide FF (114 aa).

The first 21 residues, 1 to 21 (MDSKWAALLLLLLLLLNWGHT), serve as a signal peptide directing secretion. The propeptide occupies 22 to 69 (EEAGSWGEDQVFAGEDKGPHPPQYAHIPDRIQTPGSLFRVLLQAMDTP). Residue F82 is modified to Phenylalanine amide. A propeptide spanning residues 85 to 100 (SAWGSWSKEQLNPQAR) is cleaved from the precursor. F111 bears the Phenylalanine amide mark.

It belongs to the FARP (FMRFamide related peptide) family.

The protein resides in the secreted. Functionally, morphine modulating peptides. Have wide-ranging physiologic effects, including the modulation of morphine-induced analgesia, elevation of arterial blood pressure, and increased somatostatin secretion from the pancreas. Neuropeptide FF potentiates and sensitizes ASIC1 and ASIC3 channels. In Mus musculus (Mouse), this protein is Pro-FMRFamide-related neuropeptide FF (Npff).